The following is a 187-amino-acid chain: Large ribosomal subunit protein uL10 (187 aa).

Belongs to the universal ribosomal protein uL10 family. In terms of assembly, part of the ribosomal stalk of the 50S ribosomal subunit. The N-terminus interacts with L11 and the large rRNA to form the base of the stalk. The C-terminus forms an elongated spine to which L12 dimers bind in a sequential fashion forming a multimeric L10(L12)X complex.

Functionally, forms part of the ribosomal stalk, playing a central role in the interaction of the ribosome with GTP-bound translation factors. The sequence is that of Large ribosomal subunit protein uL10 from Synechococcus sp. (strain JA-3-3Ab) (Cyanobacteria bacterium Yellowstone A-Prime).